A 333-amino-acid chain; its full sequence is MVINDIESLTDQALADVAAAQNLDHLEVLRVALLGKNGSITLQLKQLGKLPVEQRKAIGEKVNCVRDLISVALMDRKAALESAALSKRLIDERVDVTLPGRRGERGGLHPVTRTLERITEIFARLGYELVEGPEIEDDWHNFEALNFPLHHPARAMHDTFYFGDGRLLRTHTSGVQVRYMSDHRPPLRMIAAGKVYRSDSDQTHSPMFHQIEGLLIDKHATFVHLKGTLSEFLRAFFERDFEVRFRPSYFPFVEPGAEVDIAWQQSDSSVRWLEVLGCGMVHPNVLKNVGIDSECYTGFAFGLGVERFAMLRYGVDDLRAFFENDVRFLRQFS.

Position 254 (Glu-254) interacts with Mg(2+).

It belongs to the class-II aminoacyl-tRNA synthetase family. Phe-tRNA synthetase alpha subunit type 1 subfamily. In terms of assembly, tetramer of two alpha and two beta subunits. Mg(2+) is required as a cofactor.

Its subcellular location is the cytoplasm. The enzyme catalyses tRNA(Phe) + L-phenylalanine + ATP = L-phenylalanyl-tRNA(Phe) + AMP + diphosphate + H(+). The chain is Phenylalanine--tRNA ligase alpha subunit (pheS) from Xylella fastidiosa (strain 9a5c).